The following is a 143-amino-acid chain: Chorion class A protein Ld5 (143 aa).

The N-terminal stretch at 1–21 (MNSFALLLVCIQACLVQSVFS) is a signal peptide.

Belongs to the chorion protein family.

Its function is as follows. This protein is one of many from the eggshell of the gypsy moth. This Lymantria dispar (Gypsy moth) protein is Chorion class A protein Ld5.